The primary structure comprises 1274 residues: Protein ECM30 (1274 aa).

Disordered stretches follow at residues 23 to 42, 405 to 439, and 494 to 517; these read EDAD…SLSV, RRAV…QTKP, and SSSS…DTSN. Low complexity-rich tracts occupy residues 27-42, 409-432, and 494-515; these read ASSP…SLSV, STSS…AAYH, and SSSS…SNDT. A Phosphoserine modification is found at S635. The span at 803 to 822 shows a compositional bias: low complexity; it reads NQQHQNQQQGQNDNRGQNQN. Positions 803-842 are disordered; that stretch reads NQQHQNQQQGQNDNRGQNQNEDPGQENESPTPYLLFNPAS. A Phosphoserine modification is found at S1065. The interval 1100-1149 is disordered; that stretch reads HLRSSSSSSSITLEKTTSNSSSIRTRPNSHHVAPETNNNNSTNGNSNNSS. Polar residues predominate over residues 1110 to 1125; sequence ITLEKTTSNSSSIRTR. Positions 1135–1149 are enriched in low complexity; the sequence is TNNNNSTNGNSNNSS.

It is found in the cytoplasm. Functionally, seems to be involved in cell wall organization and biogenesis. The polypeptide is Protein ECM30 (ECM30) (Saccharomyces cerevisiae (strain ATCC 204508 / S288c) (Baker's yeast)).